Consider the following 914-residue polypeptide: Linoleate 13S-lipoxygenase 3-1, chloroplastic (914 aa).

Residues M1–R83 constitute a chloroplast transit peptide. Positions L96–S218 constitute a PLAT domain. The Lipoxygenase domain maps to P221–I914. 5 residues coordinate Fe cation: H574, H579, H765, N769, and I914.

This sequence belongs to the lipoxygenase family. In terms of assembly, monomer. Fe cation is required as a cofactor. As to expression, expressed in roots and leaves. Detected in tubers and flower buds.

It localises to the plastid. It is found in the chloroplast stroma. The protein localises to the chloroplast thylakoid. The enzyme catalyses (9Z,12Z)-octadecadienoate + O2 = (13S)-hydroperoxy-(9Z,11E)-octadecadienoate. The catalysed reaction is (9Z,12Z,15Z)-octadecatrienoate + O2 = (13S)-hydroperoxy-(9Z,11E,15Z)-octadecatrienoate. The protein operates within lipid metabolism; oxylipin biosynthesis. Plant lipoxygenases may be involved in a number of diverse aspects of plant physiology including growth and development, pest resistance, and senescence or responses to wounding. Required for the regulation of wound-induced gene expression, but is not involved in the bulk production of jasmonate upon wounding. Catalyzes the hydroperoxidation of lipids containing a cis,cis-1,4-pentadiene structure. Linolenic acid is the preferred substrate, before linoleic and arachidonic acids. This chain is Linoleate 13S-lipoxygenase 3-1, chloroplastic (LOX3.1), found in Solanum tuberosum (Potato).